Here is a 111-residue protein sequence, read N- to C-terminus: N-alpha-acetyltransferase 38-B, NatC auxiliary subunit (111 aa).

The 79-residue stretch at 28 to 106 folds into the Sm domain; that stretch reads TARHKLESLL…IVSIQVELET (79 aa).

Belongs to the snRNP Sm proteins family. In terms of assembly, component of the N-terminal acetyltransferase C (NatC) complex, which is composed of naa35, naa38 and naa30.

It localises to the cytoplasm. Its function is as follows. Auxillary component of the N-terminal acetyltransferase C (NatC) complex which catalyzes acetylation of N-terminal methionine residues. This Xenopus laevis (African clawed frog) protein is N-alpha-acetyltransferase 38-B, NatC auxiliary subunit (naa38-b).